A 418-amino-acid chain; its full sequence is Tryptophan synthase beta chain (418 aa).

Residues 1–18 are compositionally biased toward polar residues; that stretch reads MTSTLPNASTPDPASLQP. The disordered stretch occupies residues 1–23; the sequence is MTSTLPNASTPDPASLQPSVRPG. Lysine 111 is modified (N6-(pyridoxal phosphate)lysine).

It belongs to the TrpB family. In terms of assembly, tetramer of two alpha and two beta chains. It depends on pyridoxal 5'-phosphate as a cofactor.

The enzyme catalyses (1S,2R)-1-C-(indol-3-yl)glycerol 3-phosphate + L-serine = D-glyceraldehyde 3-phosphate + L-tryptophan + H2O. Its pathway is amino-acid biosynthesis; L-tryptophan biosynthesis; L-tryptophan from chorismate: step 5/5. Its function is as follows. The beta subunit is responsible for the synthesis of L-tryptophan from indole and L-serine. The polypeptide is Tryptophan synthase beta chain (Parasynechococcus marenigrum (strain WH8102)).